A 368-amino-acid polypeptide reads, in one-letter code: Forkhead box protein I2 (368 aa).

A disordered region spans residues 33–54; that stretch reads QNQQLPQRPAAPPALGYGRNEY. The segment at residues 124-218 is a DNA-binding region (fork-head); sequence RPPYSYSSLI…DNGNFRRKRK (95 aa). The interval 243 to 272 is disordered; it reads SLGSDSPRGASALEQSSYGTPESKSRPAGG. Over residues 255–264 the composition is skewed to polar residues; the sequence is LEQSSYGTPE.

It is found in the nucleus. In terms of biological role, possible transcriptional activator. The sequence is that of Forkhead box protein I2 from Xenopus tropicalis (Western clawed frog).